The primary structure comprises 585 residues: A-type ATP synthase subunit A (585 aa).

235–242 (GPFGSGKT) contributes to the ATP binding site.

It belongs to the ATPase alpha/beta chains family. In terms of assembly, has multiple subunits with at least A(3), B(3), C, D, E, F, H, I and proteolipid K(x).

It localises to the cell membrane. The catalysed reaction is ATP + H2O + 4 H(+)(in) = ADP + phosphate + 5 H(+)(out). Component of the A-type ATP synthase that produces ATP from ADP in the presence of a proton gradient across the membrane. The A chain is the catalytic subunit. This Halobacterium salinarum (strain ATCC 29341 / DSM 671 / R1) protein is A-type ATP synthase subunit A.